The sequence spans 659 residues: A-type ATP synthase subunit I (659 aa).

8 helical membrane passes run 376-396 (FFFG…IISA), 415-435 (IMLW…SYCG), 460-480 (MIAL…GFIV), 489-509 (GAIF…LFAL), 518-538 (LIVK…EVLA), 542-562 (MAVL…LSYA), 568-588 (ALAT…IWGI), and 590-610 (IASV…GHIF).

Belongs to the V-ATPase 116 kDa subunit family. In terms of assembly, has multiple subunits with at least A(3), B(3), C, D, E, F, H, I and proteolipid K(x).

The protein resides in the cell membrane. In terms of biological role, component of the A-type ATP synthase that produces ATP from ADP in the presence of a proton gradient across the membrane. This is A-type ATP synthase subunit I from Pyrococcus horikoshii (strain ATCC 700860 / DSM 12428 / JCM 9974 / NBRC 100139 / OT-3).